Reading from the N-terminus, the 137-residue chain is MIWKRHLTLDELNATSDNTMVAHLGIVYTRLGDDVLEAEMPVDTRTHQPFGLLHGGASAALAETLGSMAGFMMTRDGQCVVGTELNATHHRPMSEGKVRGVCQPLHLGRQNQSWEIIVFDEQGRRCCTCRLGTAVLG.

Glu-63 (nucleophile or proton acceptor) is an active-site residue.

Belongs to the thioesterase PaaI family. As to quaternary structure, homotetramer. Dimer of dimers. Interacts specifically with the aryl carrier protein (ArCP) domain of EntB.

The protein resides in the cytoplasm. It functions in the pathway siderophore biosynthesis; enterobactin biosynthesis. Required for optimal enterobactin synthesis. Acts as a proofreading enzyme that prevents EntB misacylation by hydrolyzing the thioester bound existing between EntB and wrongly charged molecules. This chain is Proofreading thioesterase EntH, found in Shigella sonnei (strain Ss046).